The sequence spans 167 residues: MINVEIVRHYNKWREHKQINKSLIKKITQNILLRFDNFSKIKQFELSILLTNAAEILILNKQFRNIEKATNVLSFPSNELNWQDLYSKLEFLGDSDYMHLGDIAFCYEVIYNESCEQYKTFENHFIHLLIHSILHLIGFDHQNDTEANIMENLEIEILSYFGIFPPY.

Residues His-131, His-135, and His-141 each coordinate Zn(2+).

It belongs to the endoribonuclease YbeY family. It depends on Zn(2+) as a cofactor.

It localises to the cytoplasm. In terms of biological role, single strand-specific metallo-endoribonuclease involved in late-stage 70S ribosome quality control and in maturation of the 3' terminus of the 16S rRNA. This chain is Endoribonuclease YbeY, found in Rickettsia rickettsii (strain Sheila Smith).